The chain runs to 267 residues: Undecaprenyl-diphosphatase (267 aa).

The next 8 membrane-spanning stretches (helical) occupy residues 1–21 (MSEL…FLPI), 39–59 (QGLA…LIYF), 87–107 (WWIL…KSLV), 113–133 (SGYV…WADA), 144–164 (TGLK…IPGT), 189–209 (FLMS…KFIL), 219–239 (LFLG…VFLI), and 244–264 (VGMM…FYIL).

Belongs to the UppP family.

Its subcellular location is the cell inner membrane. The enzyme catalyses di-trans,octa-cis-undecaprenyl diphosphate + H2O = di-trans,octa-cis-undecaprenyl phosphate + phosphate + H(+). In terms of biological role, catalyzes the dephosphorylation of undecaprenyl diphosphate (UPP). Confers resistance to bacitracin. This chain is Undecaprenyl-diphosphatase, found in Psychromonas ingrahamii (strain DSM 17664 / CCUG 51855 / 37).